A 709-amino-acid polypeptide reads, in one-letter code: F-box only protein 40 (709 aa).

The TRAF-type zinc-finger motif lies at 53-112; that stretch reads EHQLLCPLEQVPCLNSEYGCPLSMSRHKLAKHLQVCPASVVCCSMEWNRWPNVDSETTLH. Positions 232–280 are disordered; the sequence is TNSSASCESKNKNDSEKEQISSGHNMVEGEGAPKKKEPQENQKQQDVRT. Basic and acidic residues-rich tracts occupy residues 240-250 and 262-277; these read SKNKNDSEKEQ and GAPK…KQQD. The region spanning 570–624 is the F-box domain; that stretch reads QNSLTSLPLEILKYIAGFLDSVSLAQLSQVSVLMRNICATLLQERGMVLLQWKKK.

As to quaternary structure, directly interacts with SKP1 and CUL1. Expressed only in heart and skeletal muscle.

It localises to the cytoplasm. In terms of biological role, probable substrate-recognition component of the SCF (SKP1-CUL1-F-box protein)-type E3 ubiquitin ligase complex that may function in myogenesis. In Homo sapiens (Human), this protein is F-box only protein 40 (FBXO40).